The chain runs to 468 residues: Arginine biosynthesis bifunctional protein ArgJ, mitochondrial (468 aa).

A mitochondrion-targeting transit peptide spans 1-23 (MVGFSRCALSQLRQPKAQLVRSF). 6 residues coordinate substrate: T198, K227, T238, E324, N463, and T468. T238 acts as the Nucleophile in catalysis.

Belongs to the ArgJ family. Heterodimer of an alpha and a beta chain. The alpha and beta chains are autoproteolytically processed from a single precursor protein within the mitochondrion.

Its subcellular location is the mitochondrion matrix. It catalyses the reaction N(2)-acetyl-L-ornithine + L-glutamate = N-acetyl-L-glutamate + L-ornithine. The enzyme catalyses L-glutamate + acetyl-CoA = N-acetyl-L-glutamate + CoA + H(+). It functions in the pathway amino-acid biosynthesis; L-arginine biosynthesis; L-ornithine and N-acetyl-L-glutamate from L-glutamate and N(2)-acetyl-L-ornithine (cyclic): step 1/1. Its pathway is amino-acid biosynthesis; L-arginine biosynthesis; N(2)-acetyl-L-ornithine from L-glutamate: step 1/4. Functionally, catalyzes two activities which are involved in the cyclic version of arginine biosynthesis: the synthesis of acetylglutamate from glutamate and acetyl-CoA, and of ornithine by transacetylation between acetylornithine and glutamate. The protein is Arginine biosynthesis bifunctional protein ArgJ, mitochondrial of Podospora anserina (strain S / ATCC MYA-4624 / DSM 980 / FGSC 10383) (Pleurage anserina).